The following is a 95-amino-acid chain: Acylphosphatase (95 aa).

In terms of domain architecture, Acylphosphatase-like spans 5–93 (RAHLFIRGKV…GEFQDFRILP (89 aa)). Catalysis depends on residues Arg-20 and Asn-38.

It belongs to the acylphosphatase family.

The catalysed reaction is an acyl phosphate + H2O = a carboxylate + phosphate + H(+). The polypeptide is Acylphosphatase (acyP) (Pyrobaculum arsenaticum (strain DSM 13514 / JCM 11321 / PZ6)).